An 85-amino-acid polypeptide reads, in one-letter code: Photosystem I reaction center subunit PsaK (85 aa).

2 helical membrane passes run 13-33 (VSWT…AIAI) and 59-79 (GAML…ILGL).

It belongs to the PsaG/PsaK family.

The protein resides in the cellular thylakoid membrane. The chain is Photosystem I reaction center subunit PsaK from Synechococcus sp. (strain WH7803).